The primary structure comprises 447 residues: Transducin beta-like protein 2 (447 aa).

The segment at 38–72 (RSGRPACQKANGFPPDKSSGSKKQKQYQRIRKEKP) is disordered. Basic residues predominate over residues 57–69 (GSKKQKQYQRIRK). WD repeat units lie at residues 88 to 127 (SHSG…QREH), 134 to 174 (VELD…DGGY), 186 to 226 (KHKA…STIN), 228 to 267 (NQMN…GEFQ), 277 to 316 (GHSA…KKKQ), 329 to 367 (AAGA…KEEC), and 371 to 409 (VHGE…RAMV). A Glycyl lysine isopeptide (Lys-Gly) (interchain with G-Cter in SUMO2) cross-link involves residue Lys168. Thr433 carries the post-translational modification Phosphothreonine; by ATM or ATR.

This chain is Transducin beta-like protein 2 (TBL2), found in Homo sapiens (Human).